The chain runs to 116 residues: uncharacterized protein (116 aa).

A helical transmembrane segment spans residues 5-23 (LLAVETWYMLILSFRFLFF).

It localises to the membrane. This is an uncharacterized protein from Saccharomyces cerevisiae (strain ATCC 204508 / S288c) (Baker's yeast).